Here is a 632-residue protein sequence, read N- to C-terminus: Palmitoyltransferase ZDHHC17 (632 aa).

Over 1–304 (MQREEGFNTK…LKADKEFRQK (304 aa)) the chain is Cytoplasmic. Residues 11 to 305 (MADGPDEYDT…KADKEFRQKV (295 aa)) are necessary and sufficient for interaction with DNAJC5 and SNAP25. 7 ANK repeats span residues 51–86 (THID…VRQP), 89–118 (ENVT…IVDQ), 123–152 (LNST…DPSL), 156–185 (EGCS…DVDM), 189–219 (NGMT…SVNL), 224–253 (HKNT…NVDA), and 257–286 (KGES…AKGY). 2 helical membrane-spanning segments follow: residues 305 to 325 (VMLG…DLNI) and 326 to 346 (DSWL…QFLS). Topologically, residues 347–357 (KSFFDHSMHSA) are cytoplasmic. A helical transmembrane segment spans residues 358–378 (LPLGIYLATKFWMYVTWFFWF). Residues 379-381 (WND) lie on the Lumenal side of the membrane. A helical membrane pass occupies residues 382 to 402 (LNFLFIHLPFLANSVALFYNF). Residues 403–480 (GKSWKSDPGI…GNCVGAGNHR (78 aa)) are Cytoplasmic-facing. The DHHC domain occupies 437–487 (IFCSTCLIRKPVRSKHCGVCNRCIAKFDHHCPWVGNCVGAGNHRYFMGYLF). Cys467 serves as the catalytic S-palmitoyl cysteine intermediate. The chain crosses the membrane as a helical span at residues 481–501 (YFMGYLFFLLFMICWMIYGCI). Residues 502–529 (SYWGLHCETTYTKDGFWTYITQIATCSP) lie on the Lumenal side of the membrane. The helical transmembrane segment at 530-550 (WMFWMFLNSVFHFMWVAVLLM) threads the bilayer. Residues 551-632 (CQMYQISCLG…QISGSGYQLV (82 aa)) lie on the Cytoplasmic side of the membrane.

Belongs to the DHHC palmitoyltransferase family. AKR/ZDHHC17 subfamily. In terms of assembly, interacts (via ANK repeats) with numerous proteins (via the consensus sequence motif [VIAP]-[VIT]-x-x-Q-P). Interacts (via ANK repeats) with CLIP3. Interacts (via ANK repeats) with HTT; this interaction is inversely correlated to the length of the polyglutamine tract added to the huntingtin protein in Huntington disease. Interacts (via ANK repeats) with DNAJC5 (via C-terminus). Interacts (via ANK repeats) with MAP6. Interacts (via ANK repeats) with SNAP23. Interacts (via ANK repeats) with SNAP25. Interacts (via ANK repeats) with EVL. Interacts with SPRED1 and SPRED3. Interacts with GPM6A and OPTN. May interact (via ANK repeats) with SPRED2. May interact with NTRK1; may regulate its localization and function. Post-translationally, autopalmitoylated. Autopalmitoylation has a regulatory role in ZDHHC17-mediated Mg(2+) transport. In terms of tissue distribution, expressed in all brain regions. Expression is highest in the cortex, cerebellum, occipital lobe and caudate and lowest in the spinal cord. Expression is also seen in testis, pancreas, heart and kidney.

Its subcellular location is the golgi apparatus membrane. It localises to the cytoplasmic vesicle membrane. It is found in the presynaptic cell membrane. The catalysed reaction is L-cysteinyl-[protein] + hexadecanoyl-CoA = S-hexadecanoyl-L-cysteinyl-[protein] + CoA. The enzyme catalyses L-cysteinyl-[protein] + tetradecanoyl-CoA = S-tetradecanoyl-L-cysteinyl-[protein] + CoA. It carries out the reaction L-cysteinyl-[protein] + octadecanoyl-CoA = S-octadecanoyl-L-cysteinyl-[protein] + CoA. Functionally, palmitoyltransferase that catalyzes the addition of palmitate onto various protein substrates and is involved in a variety of cellular processes. Has no stringent fatty acid selectivity and in addition to palmitate can also transfer onto target proteins myristate from tetradecanoyl-CoA and stearate from octadecanoyl-CoA. Palmitoyltransferase specific for a subset of neuronal proteins, including SNAP25, DLG4/PSD95, GAD2, SYT1 and HTT. Also palmitoylates neuronal protein GPM6A as well as SPRED1 and SPRED3. Could also play a role in axonogenesis through the regulation of NTRK1 and the downstream ERK1/ERK2 signaling cascade. May be involved in the sorting or targeting of critical proteins involved in the initiating events of endocytosis at the plasma membrane. May play a role in Mg(2+) transport. Could also palmitoylate DNAJC5 and regulate its localization to the Golgi membrane. Palmitoylates CASP6, thereby preventing its dimerization and subsequent activation. This is Palmitoyltransferase ZDHHC17 from Homo sapiens (Human).